Reading from the N-terminus, the 297-residue chain is CASP-like protein 4A2 (297 aa).

A disordered region spans residues 1 to 136 (MKMKRTVSSN…MNGEESATTA (136 aa)). At 1–149 (MKMKRTVSSN…ARRDDLVSVT (149 aa)) the chain is on the cytoplasmic side. Low complexity predominate over residues 8–19 (SSNSEAYSYNES). The segment covering 69–83 (LPSPIPPPPPQIPPP) has biased composition (pro residues). A compositionally biased stretch (polar residues) spans 93–121 (MNSSLDKSPSSMVVQNSWVREDGQQNTTR). A helical membrane pass occupies residues 150–170 (ALGFRITEVILCVISFSIMAA). The Extracellular portion of the chain corresponds to 171 to 189 (DKTQGWSGDSYDRYKEYRY). A helical transmembrane segment spans residues 190–210 (CLAVNVIAFVYSAFEACDAAC). The Cytoplasmic portion of the chain corresponds to 211-225 (YMAKESYMMNCGFHD). The chain crosses the membrane as a helical span at residues 226–246 (LFVFSMDQLLAYLLMSASSCA). Topologically, residues 247–265 (ATRVDDWVSNWGKDEFTQM) are extracellular. The helical transmembrane segment at 266-286 (ATASIAVSFLAFGAFAVSALI) threads the bilayer. Residues 287 to 297 (SSYRLFTHASS) lie on the Cytoplasmic side of the membrane.

It belongs to the Casparian strip membrane proteins (CASP) family. As to quaternary structure, homodimer and heterodimers.

It is found in the cell membrane. The polypeptide is CASP-like protein 4A2 (Arabidopsis lyrata subsp. lyrata (Lyre-leaved rock-cress)).